Consider the following 242-residue polypeptide: Protein HTATIP2 (242 aa).

Alanine 2 bears the N-acetylalanine mark. Positions 2-25 are required for interaction with elongation factor EEF1A1; it reads ADKETLLKLREDFKMQNKSVFILG. 12 residues coordinate NADPH: serine 27, glycine 28, glutamate 29, threonine 30, arginine 52, arginine 53, leucine 92, glycine 93, tyrosine 143, lysine 147, leucine 170, and arginine 178. The Proton acceptor role is filled by tyrosine 143. The active site involves lysine 147.

Monomer. Forms homodimers during oxidative stress. Interacts (via N-terminus) with elongation factor EEF1A1 (via middle-region); the interaction is direct and competes with EEF1A1 binding to guanyl-nucleotide exchange factor EEF1B2, thereby inhibiting GDP for GTP exchange and reactivation of EEF1A1. Interacts with nuclear transport receptors XPO4, IPO5/RANBP5, IPO7, IPO9 and KPNB1 as well as GCN1L1/GCN1 and LRPPRC probably through their HEAT repeats. Binds NCOA5/CIA.

Represses translation by preventing reactivation of elongation factor eEF1A. May also inhibit nuclear import by competing with nuclear import substrates for binding to a subset of nuclear transport receptors. Has additionally been proposed to act as a redox sensor involved in cellular oxidative stress surveillance. May bind NADPH. The protein is Protein HTATIP2 of Rattus norvegicus (Rat).